Reading from the N-terminus, the 156-residue chain is ATP synthase subunit b (156 aa).

The helical transmembrane segment at 7 to 27 (LFAQLVVFFILAWFTMKFVWP) threads the bilayer.

Belongs to the ATPase B chain family. As to quaternary structure, F-type ATPases have 2 components, F(1) - the catalytic core - and F(0) - the membrane proton channel. F(1) has five subunits: alpha(3), beta(3), gamma(1), delta(1), epsilon(1). F(0) has four main subunits: a(1), b(2) and c(10-14). The alpha and beta chains form an alternating ring which encloses part of the gamma chain. F(1) is attached to F(0) by a central stalk formed by the gamma and epsilon chains, while a peripheral stalk is formed by the delta and b chains.

It localises to the cell inner membrane. Its function is as follows. F(1)F(0) ATP synthase produces ATP from ADP in the presence of a proton or sodium gradient. F-type ATPases consist of two structural domains, F(1) containing the extramembraneous catalytic core and F(0) containing the membrane proton channel, linked together by a central stalk and a peripheral stalk. During catalysis, ATP synthesis in the catalytic domain of F(1) is coupled via a rotary mechanism of the central stalk subunits to proton translocation. Component of the F(0) channel, it forms part of the peripheral stalk, linking F(1) to F(0). The chain is ATP synthase subunit b from Methylibium petroleiphilum (strain ATCC BAA-1232 / LMG 22953 / PM1).